Here is a 153-residue protein sequence, read N- to C-terminus: Ribonuclease H (153 aa).

Residues 1-142 (MTPEVVIYTD…ADALARKGLS (142 aa)) enclose the RNase H type-1 domain. Residues Asp10, Glu48, Asp70, and Asp134 each contribute to the Mg(2+) site.

The protein belongs to the RNase H family. As to quaternary structure, monomer. Mg(2+) serves as cofactor.

The protein localises to the cytoplasm. It carries out the reaction Endonucleolytic cleavage to 5'-phosphomonoester.. Its function is as follows. Endonuclease that specifically degrades the RNA of RNA-DNA hybrids. This Phenylobacterium zucineum (strain HLK1) protein is Ribonuclease H.